Here is a 286-residue protein sequence, read N- to C-terminus: Bifunctional protein FolD (286 aa).

NADP(+) contacts are provided by residues 167-169 (GRS) and Ile-233.

The protein belongs to the tetrahydrofolate dehydrogenase/cyclohydrolase family. In terms of assembly, homodimer.

The catalysed reaction is (6R)-5,10-methylene-5,6,7,8-tetrahydrofolate + NADP(+) = (6R)-5,10-methenyltetrahydrofolate + NADPH. The enzyme catalyses (6R)-5,10-methenyltetrahydrofolate + H2O = (6R)-10-formyltetrahydrofolate + H(+). It functions in the pathway one-carbon metabolism; tetrahydrofolate interconversion. Catalyzes the oxidation of 5,10-methylenetetrahydrofolate to 5,10-methenyltetrahydrofolate and then the hydrolysis of 5,10-methenyltetrahydrofolate to 10-formyltetrahydrofolate. This is Bifunctional protein FolD from Limosilactobacillus reuteri (strain DSM 20016) (Lactobacillus reuteri).